The sequence spans 128 residues: Large ribosomal subunit protein uL22 (128 aa).

Belongs to the universal ribosomal protein uL22 family. As to quaternary structure, part of the 50S ribosomal subunit.

In terms of biological role, this protein binds specifically to 23S rRNA; its binding is stimulated by other ribosomal proteins, e.g. L4, L17, and L20. It is important during the early stages of 50S assembly. It makes multiple contacts with different domains of the 23S rRNA in the assembled 50S subunit and ribosome. Functionally, the globular domain of the protein is located near the polypeptide exit tunnel on the outside of the subunit, while an extended beta-hairpin is found that lines the wall of the exit tunnel in the center of the 70S ribosome. This Nitrobacter winogradskyi (strain ATCC 25391 / DSM 10237 / CIP 104748 / NCIMB 11846 / Nb-255) protein is Large ribosomal subunit protein uL22.